The sequence spans 200 residues: Glycerol-3-phosphate acyltransferase (200 aa).

A run of 5 helical transmembrane segments spans residues 6–26 (LTLG…AVLV), 56–76 (SAAM…YIAF), 82–102 (QVAL…PIFF), 118–138 (APIG…MVLI), and 141–161 (YSSL…WFLD).

The protein belongs to the PlsY family. As to quaternary structure, probably interacts with PlsX.

It localises to the cell inner membrane. It catalyses the reaction an acyl phosphate + sn-glycerol 3-phosphate = a 1-acyl-sn-glycero-3-phosphate + phosphate. It participates in lipid metabolism; phospholipid metabolism. Catalyzes the transfer of an acyl group from acyl-phosphate (acyl-PO(4)) to glycerol-3-phosphate (G3P) to form lysophosphatidic acid (LPA). This enzyme utilizes acyl-phosphate as fatty acyl donor, but not acyl-CoA or acyl-ACP. This chain is Glycerol-3-phosphate acyltransferase, found in Shewanella sediminis (strain HAW-EB3).